We begin with the raw amino-acid sequence, 102 residues long: Large ribosomal subunit protein bL21 (102 aa).

It belongs to the bacterial ribosomal protein bL21 family. In terms of assembly, part of the 50S ribosomal subunit. Contacts protein L20.

Its function is as follows. This protein binds to 23S rRNA in the presence of protein L20. This chain is Large ribosomal subunit protein bL21, found in Campylobacter jejuni subsp. jejuni serotype O:6 (strain 81116 / NCTC 11828).